The chain runs to 932 residues: Protein translocase subunit SecA (932 aa).

ATP-binding positions include glutamine 86, 104–108, and aspartate 494; that span reads GEGKT. The segment at 857–932 is disordered; sequence EDAGAEAHAS…KPAPKRKKRR (76 aa). The segment covering 905–915 has biased composition (polar residues); the sequence is TAGSAGDSNLP. Over residues 920–932 the composition is skewed to basic residues; sequence KTNKPAPKRKKRR.

The protein belongs to the SecA family. Monomer and homodimer. Part of the essential Sec protein translocation apparatus which comprises SecA, SecYEG and auxiliary proteins SecDF. Other proteins may also be involved.

The protein resides in the cell membrane. It localises to the cytoplasm. It carries out the reaction ATP + H2O + cellular proteinSide 1 = ADP + phosphate + cellular proteinSide 2.. In terms of biological role, part of the Sec protein translocase complex. Interacts with the SecYEG preprotein conducting channel. Has a central role in coupling the hydrolysis of ATP to the transfer of proteins into and across the cell membrane, serving as an ATP-driven molecular motor driving the stepwise translocation of polypeptide chains across the membrane. This chain is Protein translocase subunit SecA, found in Renibacterium salmoninarum (strain ATCC 33209 / DSM 20767 / JCM 11484 / NBRC 15589 / NCIMB 2235).